We begin with the raw amino-acid sequence, 125 residues long: Urotensin-2 (125 aa).

Positions 1-20 (MYKLASCCLLFIGFLNPLFS) are cleaved as a signal peptide. Residues 21–111 (LPLLDSGEVS…HLLARIRKPY (91 aa)) constitute a propeptide that is removed on maturation. The cysteines at positions 119 and 124 are disulfide-linked.

Belongs to the urotensin-2 family.

Its subcellular location is the secreted. Highly potent vasoconstrictor. This is Urotensin-2 (UTS2) from Macaca mulatta (Rhesus macaque).